Here is a 225-residue protein sequence, read N- to C-terminus: Adenylate kinase (225 aa).

10 to 15 serves as a coordination point for ATP; sequence GSGKGT. The NMP stretch occupies residues 30–59; the sequence is ESGAIFRENISKGTEIGKKAKEYIDRGDLV. Residues Ser-31, Arg-36, 57 to 59, 85 to 88, and Gln-92 contribute to the AMP site; these read DLV and GFPR. The segment at 126–165 is LID; the sequence is GRRLCENDNNHPNNIFIDAIKPDGDKCRVCGGALSARSDD. Position 127 (Arg-127) interacts with ATP. The AMP site is built by Arg-162 and Arg-174. Residue Pro-211 participates in ATP binding.

The protein belongs to the adenylate kinase family. As to quaternary structure, monomer.

It is found in the cytoplasm. The catalysed reaction is AMP + ATP = 2 ADP. It participates in purine metabolism; AMP biosynthesis via salvage pathway; AMP from ADP: step 1/1. Its function is as follows. Catalyzes the reversible transfer of the terminal phosphate group between ATP and AMP. Plays an important role in cellular energy homeostasis and in adenine nucleotide metabolism. This chain is Adenylate kinase, found in Desulfatibacillum aliphaticivorans.